A 504-amino-acid chain; its full sequence is Glycerol kinase (504 aa).

Thr12 provides a ligand contact to ADP. ATP is bound by residues Thr12, Thr13, and Ser14. Sn-glycerol 3-phosphate is bound at residue Thr12. Arg16 serves as a coordination point for ADP. Sn-glycerol 3-phosphate-binding residues include Arg82, Glu83, Tyr134, and Asp249. 5 residues coordinate glycerol: Arg82, Glu83, Tyr134, Asp249, and Gln250. The ADP site is built by Thr271 and Gly315. 4 residues coordinate ATP: Thr271, Gly315, Gln319, and Gly416. Gly416 and Asn420 together coordinate ADP.

This sequence belongs to the FGGY kinase family.

It carries out the reaction glycerol + ATP = sn-glycerol 3-phosphate + ADP + H(+). It participates in polyol metabolism; glycerol degradation via glycerol kinase pathway; sn-glycerol 3-phosphate from glycerol: step 1/1. Its activity is regulated as follows. Inhibited by fructose 1,6-bisphosphate (FBP). In terms of biological role, key enzyme in the regulation of glycerol uptake and metabolism. Catalyzes the phosphorylation of glycerol to yield sn-glycerol 3-phosphate. The chain is Glycerol kinase from Mycobacteroides abscessus (strain ATCC 19977 / DSM 44196 / CCUG 20993 / CIP 104536 / JCM 13569 / NCTC 13031 / TMC 1543 / L948) (Mycobacterium abscessus).